A 227-amino-acid chain; its full sequence is 2-phospho-L-lactate guanylyltransferase (227 aa).

The protein belongs to the CofC family. Homodimer.

It carries out the reaction (2S)-2-phospholactate + GTP + H(+) = (2S)-lactyl-2-diphospho-5'-guanosine + diphosphate. It functions in the pathway cofactor biosynthesis; coenzyme F420 biosynthesis. Guanylyltransferase that catalyzes the activation of (2S)-2-phospholactate (2-PL) as (2S)-lactyl-2-diphospho-5'-guanosine, via the condensation of 2-PL with GTP. It is involved in the biosynthesis of coenzyme F420, a hydride carrier cofactor. The sequence is that of 2-phospho-L-lactate guanylyltransferase from Methanocaldococcus sp. (strain FS406-22).